The following is a 304-amino-acid chain: Rhodopsin (304 aa).

Topologically, residues 1–13 (YEYPQYYLVNPAA) are extracellular. A helical transmembrane segment spans residues 14-38 (YAALGAYMFLLILVGFPINFLTLYV). The Cytoplasmic segment spans residues 39–50 (TIEHKKLRTPLN). A helical transmembrane segment spans residues 51-73 (YILLNLAVANLFMVFGGFTTTMF). Residues 74–87 (TSIRGYFVLGHLGC) are Extracellular-facing. Cys87 and Cys164 form a disulfide bridge. Residues 88 to 110 (NLEGFFATLSGEIALWSLVVLAI) traverse the membrane as a helical segment. Residues 111-113 (ERW) carry the 'Ionic lock' involved in activated form stabilization motif. The Cytoplasmic portion of the chain corresponds to 111–129 (ERWVVVCKPISNFRFGENH). A helical transmembrane segment spans residues 130–150 (AIMGLAFTWTMAMACAAPPLV). The Extracellular segment spans residues 151-179 (GWSRYIPEGMQCSCGIDYYTRAEGFNNES). Asn177 carries N-linked (GlcNAc...) asparagine glycosylation. A helical transmembrane segment spans residues 180–201 (FVVYMFTCHFMTPLTIVFFCYG). Residues 202–229 (RLLCAVKEAAAAQQESETTQRAEREVTR) are Cytoplasmic-facing. The helical transmembrane segment at 230-251 (MVVIMVIAFLICWCPYAGVAWF) threads the bilayer. Residues 252–263 (IFTHQGSEFGPV) lie on the Extracellular side of the membrane. A helical transmembrane segment spans residues 264-285 (FMTIPAFFAKSSSIYNPMIYIC). N6-(retinylidene)lysine is present on Lys273. The Cytoplasmic portion of the chain corresponds to 286-304 (LNKQFRHCMITTLCCGKKA). 2 S-palmitoyl cysteine lipidation sites follow: Cys299 and Cys300.

This sequence belongs to the G-protein coupled receptor 1 family. Opsin subfamily. Post-translationally, phosphorylated on some or all of the serine and threonine residues present in the C-terminal region. Contains one covalently linked retinal chromophore.

It is found in the membrane. The protein resides in the cell projection. The protein localises to the cilium. It localises to the photoreceptor outer segment. Its function is as follows. Photoreceptor required for image-forming vision at low light intensity. While most salt water fish species use retinal as chromophore, most freshwater fish use 3-dehydroretinal, or a mixture of retinal and 3-dehydroretinal. Light-induced isomerization of 11-cis to all-trans retinal triggers a conformational change that activates signaling via G-proteins. Subsequent receptor phosphorylation mediates displacement of the bound G-protein alpha subunit by arrestin and terminates signaling. This chain is Rhodopsin (rho), found in Ictalurus punctatus (Channel catfish).